Reading from the N-terminus, the 377-residue chain is Carbamoyl phosphate synthase small chain (377 aa).

The CPSase stretch occupies residues 1-186 (MSTPALLVLA…LGKGFVTPDE (186 aa)). 3 residues coordinate L-glutamine: serine 47, glycine 238, and glycine 240. The region spanning 190-377 (HVVAYDFGVK…IGNMKAAKRA (188 aa)) is the Glutamine amidotransferase type-1 domain. The active-site Nucleophile is the cysteine 266. Residues leucine 267, glutamine 270, asparagine 308, glycine 310, and phenylalanine 311 each coordinate L-glutamine. Active-site residues include histidine 350 and glutamate 352.

It belongs to the CarA family. In terms of assembly, composed of two chains; the small (or glutamine) chain promotes the hydrolysis of glutamine to ammonia, which is used by the large (or ammonia) chain to synthesize carbamoyl phosphate. Tetramer of heterodimers (alpha,beta)4.

The enzyme catalyses hydrogencarbonate + L-glutamine + 2 ATP + H2O = carbamoyl phosphate + L-glutamate + 2 ADP + phosphate + 2 H(+). The catalysed reaction is L-glutamine + H2O = L-glutamate + NH4(+). It functions in the pathway amino-acid biosynthesis; L-arginine biosynthesis; carbamoyl phosphate from bicarbonate: step 1/1. The protein operates within pyrimidine metabolism; UMP biosynthesis via de novo pathway; (S)-dihydroorotate from bicarbonate: step 1/3. In terms of biological role, small subunit of the glutamine-dependent carbamoyl phosphate synthetase (CPSase). CPSase catalyzes the formation of carbamoyl phosphate from the ammonia moiety of glutamine, carbonate, and phosphate donated by ATP, constituting the first step of 2 biosynthetic pathways, one leading to arginine and/or urea and the other to pyrimidine nucleotides. The small subunit (glutamine amidotransferase) binds and cleaves glutamine to supply the large subunit with the substrate ammonia. This chain is Carbamoyl phosphate synthase small chain, found in Neisseria meningitidis serogroup B (strain ATCC BAA-335 / MC58).